Here is a 125-residue protein sequence, read N- to C-terminus: Translation initiation factor 5A (125 aa).

Lysine 35 carries the hypusine modification.

It belongs to the eIF-5A family.

It localises to the cytoplasm. Functions by promoting the formation of the first peptide bond. The chain is Translation initiation factor 5A (eIF5A) from Methanoregula boonei (strain DSM 21154 / JCM 14090 / 6A8).